Reading from the N-terminus, the 876-residue chain is Leucine--tRNA ligase (876 aa).

Residues 1 to 20 (MATERYNPRDAEPRWQQKWN) form a disordered region. Positions 43–53 (PYPSGRIHMGH) match the 'HIGH' region motif. The 'KMSKS' region signature appears at 632–636 (KMSKS). Lys-635 is an ATP binding site.

It belongs to the class-I aminoacyl-tRNA synthetase family.

The protein resides in the cytoplasm. It carries out the reaction tRNA(Leu) + L-leucine + ATP = L-leucyl-tRNA(Leu) + AMP + diphosphate. The protein is Leucine--tRNA ligase of Rhizobium leguminosarum bv. trifolii (strain WSM2304).